The sequence spans 249 residues: NADH-quinone oxidoreductase subunit C (249 aa).

The protein belongs to the complex I 30 kDa subunit family. NDH-1 is composed of 14 different subunits. Subunits NuoB, C, D, E, F, and G constitute the peripheral sector of the complex.

The protein localises to the cell inner membrane. It catalyses the reaction a quinone + NADH + 5 H(+)(in) = a quinol + NAD(+) + 4 H(+)(out). Its function is as follows. NDH-1 shuttles electrons from NADH, via FMN and iron-sulfur (Fe-S) centers, to quinones in the respiratory chain. The immediate electron acceptor for the enzyme in this species is believed to be ubiquinone. Couples the redox reaction to proton translocation (for every two electrons transferred, four hydrogen ions are translocated across the cytoplasmic membrane), and thus conserves the redox energy in a proton gradient. This Stenotrophomonas maltophilia (strain R551-3) protein is NADH-quinone oxidoreductase subunit C.